Here is a 467-residue protein sequence, read N- to C-terminus: Uronate isomerase (467 aa).

Belongs to the metallo-dependent hydrolases superfamily. Uronate isomerase family.

The enzyme catalyses D-glucuronate = D-fructuronate. It catalyses the reaction aldehydo-D-galacturonate = keto-D-tagaturonate. The protein operates within carbohydrate metabolism; pentose and glucuronate interconversion. The polypeptide is Uronate isomerase (Flavobacterium johnsoniae (strain ATCC 17061 / DSM 2064 / JCM 8514 / BCRC 14874 / CCUG 350202 / NBRC 14942 / NCIMB 11054 / UW101) (Cytophaga johnsonae)).